A 635-amino-acid chain; its full sequence is Biosynthetic arginine decarboxylase (635 aa).

Position 100 is an N6-(pyridoxal phosphate)lysine (Lys100). 282 to 292 lines the substrate pocket; it reads LDIGGGLGVDY.

This sequence belongs to the Orn/Lys/Arg decarboxylase class-II family. SpeA subfamily. Requires Mg(2+) as cofactor. It depends on pyridoxal 5'-phosphate as a cofactor.

It catalyses the reaction L-arginine + H(+) = agmatine + CO2. The protein operates within amine and polyamine biosynthesis; agmatine biosynthesis; agmatine from L-arginine: step 1/1. Its function is as follows. Catalyzes the biosynthesis of agmatine from arginine. The polypeptide is Biosynthetic arginine decarboxylase (Trichlorobacter lovleyi (strain ATCC BAA-1151 / DSM 17278 / SZ) (Geobacter lovleyi)).